Reading from the N-terminus, the 161-residue chain is MRVRLSSALRPRWRYVTFKVWSERVEALDFGGMKDLVVRALLSVLGPTGTGRIGPWLVRSYRDLNAGILRVRRGQEEEARAALSLYRRDPKLGRVFIEVLGTSGTIKGAERYLSRIPKWDRERVGNREFVLYENGEVDVVEDGRIVAFASFECPLPEENRG.

It belongs to the eukaryotic/archaeal RNase P protein component 2 family. Consists of a catalytic RNA component and at least 4-5 protein subunits.

It localises to the cytoplasm. It carries out the reaction Endonucleolytic cleavage of RNA, removing 5'-extranucleotides from tRNA precursor.. Its function is as follows. Part of ribonuclease P, a protein complex that generates mature tRNA molecules by cleaving their 5'-ends. The chain is Ribonuclease P protein component 2 from Methanopyrus kandleri (strain AV19 / DSM 6324 / JCM 9639 / NBRC 100938).